Consider the following 162-residue polypeptide: Succinate dehydrogenase assembly factor 2-A, mitochondrial (162 aa).

The protein belongs to the SDHAF2 family. In terms of assembly, interacts with the flavoprotein subunit within the SDH catalytic dimer.

It localises to the mitochondrion matrix. In terms of biological role, plays an essential role in the assembly of succinate dehydrogenase (SDH), an enzyme complex (also referred to as respiratory complex II) that is a component of both the tricarboxylic acid (TCA) cycle and the mitochondrial electron transport chain, and which couples the oxidation of succinate to fumarate with the reduction of ubiquinone (coenzyme Q) to ubiquinol. Required for flavinylation (covalent attachment of FAD) of the flavoprotein subunit of the SDH catalytic dimer. The protein is Succinate dehydrogenase assembly factor 2-A, mitochondrial of Drosophila yakuba (Fruit fly).